We begin with the raw amino-acid sequence, 384 residues long: DNA dC-&gt;dU-editing enzyme APOBEC-3G (384 aa).

The interval 1 to 60 is essential for cytoplasmic localization; sequence MNPQFRNMVDGMDPHKFSYNFKNRPILSRRNTVWLCYEVKTKGPSRPPLDAKIFRGQVYF. CMP/dCMP-type deaminase domains lie at 29-138 and 214-328; these read RRNT…LRSL and GRHE…LRTL. The residue at position 32 (Thr-32) is a Phosphothreonine; by PKA. Residues His-65, Cys-97, and Cys-100 each coordinate Zn(2+). Positions 209–336 are necessary for homooligomerization; the sequence is EPCVEGRHET…TLDEAEAKIS (128 aa). The segment at 213–215 is interaction with DNA; it reads EGR. The residue at position 218 (Thr-218) is a Phosphothreonine; by PKA and CAMK2. Zn(2+) is bound at residue His-257. Glu-259 acts as the Proton donor in catalysis. Cys-288 and Cys-291 together coordinate Zn(2+). Positions 313–320 are interaction with DNA; sequence RIYDDQGR.

This sequence belongs to the cytidine and deoxycytidylate deaminase family. In terms of assembly, homodimer. The cofactor is Zn(2+).

It localises to the cytoplasm. It is found in the nucleus. The protein resides in the P-body. It carries out the reaction a 2'-deoxycytidine in single-stranded DNA + H2O + H(+) = a 2'-deoxyuridine in single-stranded DNA + NH4(+). DNA deaminase (cytidine deaminase) which acts as an inhibitor of retrovirus replication and retrotransposon mobility. After the penetration of retroviral nucleocapsids into target cells of infection and the initiation of reverse transcription, it can induce the conversion of cytosine to uracil in the minus-sense single-strand viral DNA, leading to G-to-A hypermutations in the subsequent plus-strand viral DNA. The resultant detrimental levels of mutations in the proviral genome, along with a deamination-independent mechanism that works prior to the proviral integration, together exert efficient antiretroviral effects in infected target cells. Selectively targets single-stranded DNA and does not deaminate double-stranded DNA or single- or double-stranded RNA. In Pongo pygmaeus (Bornean orangutan), this protein is DNA dC-&gt;dU-editing enzyme APOBEC-3G (APOBEC3G).